Reading from the N-terminus, the 76-residue chain is Omega-conotoxin-like TeA61 (76 aa).

Positions 1-22 (MKLTCMMIVAVLFLTAWTFATA) are cleaved as a signal peptide. Positions 23-51 (DDSSNGLGNLFLKAHHEMKNPEASKLNER) are excised as a propeptide. Intrachain disulfides connect Cys-52/Cys-67, Cys-59/Cys-70, and Cys-66/Cys-75.

This sequence belongs to the conotoxin O1 superfamily. As to expression, expressed by the venom duct.

Its subcellular location is the secreted. Functionally, omega-conotoxins act at presynaptic membranes, they bind and block voltage-gated calcium channels (Cav). This is Omega-conotoxin-like TeA61 from Conus textile (Cloth-of-gold cone).